The following is a 552-amino-acid chain: Glutamate--tRNA ligase (552 aa).

Residues 41-51 (PSPTGFQHIGG) carry the 'HIGH' region motif. The 'KMSKS' region signature appears at 293–297 (KLSKR). K296 lines the ATP pocket.

The protein belongs to the class-I aminoacyl-tRNA synthetase family. Glutamate--tRNA ligase type 1 subfamily. As to quaternary structure, monomer.

It is found in the cytoplasm. It carries out the reaction tRNA(Glu) + L-glutamate + ATP = L-glutamyl-tRNA(Glu) + AMP + diphosphate. In terms of biological role, catalyzes the attachment of glutamate to tRNA(Glu) in a two-step reaction: glutamate is first activated by ATP to form Glu-AMP and then transferred to the acceptor end of tRNA(Glu). The protein is Glutamate--tRNA ligase of Clostridium perfringens (strain SM101 / Type A).